Reading from the N-terminus, the 116-residue chain is Large ribosomal subunit protein bL17 (116 aa).

Belongs to the bacterial ribosomal protein bL17 family. In terms of assembly, part of the 50S ribosomal subunit. Contacts protein L32.

In Rippkaea orientalis (strain PCC 8801 / RF-1) (Cyanothece sp. (strain PCC 8801)), this protein is Large ribosomal subunit protein bL17.